The chain runs to 234 residues: Transcriptional regulatory protein WalR (234 aa).

Residues K3 to L116 form the Response regulatory domain. D52 is modified (4-aspartylphosphate). Positions P133–N232 form a DNA-binding region, ompR/PhoB-type.

In terms of assembly, monomer. Homodimer. Phosphorylated by WalK; can also be dephosphorylated by WalK.

The protein localises to the cytoplasm. Functionally, member of the two-component regulatory system WalK/WalR that regulates genes involved in cell wall metabolism. Binds to the promoter region of the transcription factor fabT gene in the fabTH-acp operon in vitro. Inhibits transcription of fabT, probably acting in an unphosphorylated form, thereby playing a role in the regulation of fatty acid biosynthesis. Essential for normal growth in vitro. Required for maintaining normal cellular morphology, acting, at least in part, by regulating peptidoglycan hydrolase pcsB. Involved in maintaining expression of WalRK regulon genes in exponentially growing cells. The protein is Transcriptional regulatory protein WalR of Streptococcus pneumoniae serotype 2 (strain D39 / NCTC 7466).